Here is a 165-residue protein sequence, read N- to C-terminus: NADPH-dependent 7-cyano-7-deazaguanine reductase (165 aa).

Catalysis depends on Cys-56, which acts as the Thioimide intermediate. Catalysis depends on Asp-63, which acts as the Proton donor. Residues 78 to 80 and 97 to 98 each bind substrate; these read VES and HE.

Belongs to the GTP cyclohydrolase I family. QueF type 1 subfamily.

Its subcellular location is the cytoplasm. It carries out the reaction 7-aminomethyl-7-carbaguanine + 2 NADP(+) = 7-cyano-7-deazaguanine + 2 NADPH + 3 H(+). Its pathway is tRNA modification; tRNA-queuosine biosynthesis. Functionally, catalyzes the NADPH-dependent reduction of 7-cyano-7-deazaguanine (preQ0) to 7-aminomethyl-7-deazaguanine (preQ1). This is NADPH-dependent 7-cyano-7-deazaguanine reductase from Geobacillus thermodenitrificans (strain NG80-2).